Consider the following 277-residue polypeptide: MGQKINPHGFRLGITTDWKSRWYADKQYADYVKEDVAIRRLLATGLERAGIAKVEIERTRDRVRVDIHTARPGIVIGRRGTEADRIRADLEKLTGKQVQLNILEVKNPEAEAQLVAQGVAEQLSNRVAFRRAMRKAIQSAMRQPNVKGIRVQCSGRLGGAEMSRSEFYREGRVPLHTLRADIDYGLYEAKTTFGRIGVKVWIYKGDIVGGKRELAAAGVEAGRGAPDRPRRERPAGTRPRRSGSSGTTATSTEAGRAAAETPASDGASAPSAETTES.

The KH type-2 domain occupies 38–106 (IRRLLATGLE…QVQLNILEVK (69 aa)). Positions 217–277 (AGVEAGRGAP…SAPSAETTES (61 aa)) are disordered. Over residues 225 to 235 (APDRPRRERPA) the composition is skewed to basic and acidic residues. Positions 242 to 261 (SGSSGTTATSTEAGRAAAET) are enriched in low complexity.

Belongs to the universal ribosomal protein uS3 family. In terms of assembly, part of the 30S ribosomal subunit. Forms a tight complex with proteins S10 and S14.

Functionally, binds the lower part of the 30S subunit head. Binds mRNA in the 70S ribosome, positioning it for translation. This chain is Small ribosomal subunit protein uS3, found in Mycobacteroides abscessus (strain ATCC 19977 / DSM 44196 / CCUG 20993 / CIP 104536 / JCM 13569 / NCTC 13031 / TMC 1543 / L948) (Mycobacterium abscessus).